A 291-amino-acid polypeptide reads, in one-letter code: Putative phosphatase MG263 (291 aa).

The active-site Nucleophile is D11. Position 11 (D11) interacts with Mg(2+). L12 is a binding site for phosphate. D13 serves as a coordination point for Mg(2+). Phosphate contacts are provided by residues 60 to 61 (TG) and K217. Residue D241 coordinates Mg(2+). Residue N244 coordinates phosphate.

This sequence belongs to the HAD-like hydrolase superfamily. Cof family. Mg(2+) serves as cofactor.

The protein is Putative phosphatase MG263 of Mycoplasma genitalium (strain ATCC 33530 / DSM 19775 / NCTC 10195 / G37) (Mycoplasmoides genitalium).